The chain runs to 239 residues: Ribonuclease P protein component 3 (239 aa).

It belongs to the eukaryotic/archaeal RNase P protein component 3 family. Consists of a catalytic RNA component and at least 4-5 protein subunits.

Its subcellular location is the cytoplasm. The enzyme catalyses Endonucleolytic cleavage of RNA, removing 5'-extranucleotides from tRNA precursor.. In terms of biological role, part of ribonuclease P, a protein complex that generates mature tRNA molecules by cleaving their 5'-ends. In Methanosarcina acetivorans (strain ATCC 35395 / DSM 2834 / JCM 12185 / C2A), this protein is Ribonuclease P protein component 3.